A 127-amino-acid chain; its full sequence is Small ribosomal subunit protein uS12 (127 aa).

At Asp89 the chain carries 3-methylthioaspartic acid.

This sequence belongs to the universal ribosomal protein uS12 family. As to quaternary structure, part of the 30S ribosomal subunit. Contacts proteins S8 and S17. May interact with IF1 in the 30S initiation complex.

Its function is as follows. With S4 and S5 plays an important role in translational accuracy. Functionally, interacts with and stabilizes bases of the 16S rRNA that are involved in tRNA selection in the A site and with the mRNA backbone. Located at the interface of the 30S and 50S subunits, it traverses the body of the 30S subunit contacting proteins on the other side and probably holding the rRNA structure together. The combined cluster of proteins S8, S12 and S17 appears to hold together the shoulder and platform of the 30S subunit. The chain is Small ribosomal subunit protein uS12 from Aliarcobacter butzleri (strain RM4018) (Arcobacter butzleri).